A 441-amino-acid chain; its full sequence is CBL-interacting serine/threonine-protein kinase 3 (441 aa).

A Protein kinase domain is found at 14–269; it reads YEVGRTIGEG…PQEVFEDEWF (256 aa). Residues 20 to 28 and K43 contribute to the ATP site; that span reads IGEGTFAKV. Residue D137 is the Proton acceptor of the active site. The segment at 155 to 184 is activation loop; that stretch reads DFGLSALSQQVRDDGLLHTSCGTPNYVAPE. In terms of domain architecture, NAF spans 307 to 331; the sequence is EQPAAINAFEIISMSRGLNLENLFD. The interval 337–366 is PPI; that stretch reads KRETRITLRGGANEIIEKIEEAAKPLGFDV.

Belongs to the protein kinase superfamily. CAMK Ser/Thr protein kinase family. SNF1 subfamily. As to quaternary structure, interacts with CBL3 and CBL9. Mn(2+) is required as a cofactor. As to expression, mostly expressed in germinating seeds and young seedlings. Detected at low levels in roots, stems, leaves and flowers.

It catalyses the reaction L-seryl-[protein] + ATP = O-phospho-L-seryl-[protein] + ADP + H(+). It carries out the reaction L-threonyl-[protein] + ATP = O-phospho-L-threonyl-[protein] + ADP + H(+). Its function is as follows. Involved in the resistance to some abiotic stresses (e.g. high salt, hyperosmotic stress) in young seedlings, by regulating the expression of several stress-inducible genes (cold- and salt-induced genes but not drought-responsive genes). Required for the ABA response during germination. CIPK serine-threonine protein kinases interact with CBL proteins. Binding of a CBL protein to the regulatory NAF domain of CIPK protein lead to the activation of the kinase in a calcium-dependent manner. The CBL9/CIPK3 complex acts in the regulation of abscisic acid response in seed germination. This chain is CBL-interacting serine/threonine-protein kinase 3 (CIPK3), found in Arabidopsis thaliana (Mouse-ear cress).